A 489-amino-acid chain; its full sequence is Cytochrome P450 monooxygenase bfoB (489 aa).

The N-terminal stretch at 1–18 (MLALYLIAGLLVGLLVYR) is a signal peptide. N-linked (GlcNAc...) asparagine glycans are attached at residues Asn-113, Asn-348, and Asn-386. Position 429 (Cys-429) interacts with heme.

It belongs to the cytochrome P450 family. It depends on heme as a cofactor.

It carries out the reaction 2 fonsecin B + NADPH + O2 + H(+) = bifonsecin B + NADP(+) + 2 H2O. The enzyme catalyses 2 rubrofusarin B + NADPH + O2 + 3 H(+) = nigerone + NADP(+) + 2 H2O. The protein operates within secondary metabolite biosynthesis. Its function is as follows. Cytochrome P450 monooxygenase; part of the gene cluster that mediates the biosynthesis of bifonsecin B, a dimeric gamma-naphthopyrone. The first step in the biosynthesis of bifonsecin B is the production of gamma-naphthopyrone precursor YWA1 by the non-reducing polyketide synthase albA, via condensation of one acetyl-CoA starter unit with 6 malonyl-CoA units. YWA1 is then methylated by bfoE at position C-6 to yield foncesin which is further methylated at position C-8 by bfoD to produce fonsecin B. A key enzyme in the biosynthetic pathway is the cytochrome P450 monooxygenase bfoB which catalyzes the oxidative dimerization of fonsecin B to bifonsecin B. Bfob also catalyzes the oxidative dimerization of rubrofusarin B into nigerone. The stereoselectivity of bfoB is influenced by the two natural monomeric substrates; homodimerization of fonsecin B yields a stereochemically pure biaryl, M-foncerine B, while rubrofusarin B yields a mixture of enantiomers M- and P-nigerone. This chain is Cytochrome P450 monooxygenase bfoB, found in Aspergillus brasiliensis (strain CBS 101740 / IMI 381727 / IBT 21946).